The following is a 1755-amino-acid chain: Transposon Ty1-NL1 Gag-Pol polyprotein (1755 aa).

4 stretches are compositionally biased toward polar residues: residues M1 to S23, T48 to S60, S71 to Q86, and P131 to F152. Disordered regions lie at residues M1–Q86, P131–P171, and Q350–S420. Residues T153 to T165 are compositionally biased toward low complexity. The tract at residues N299–H401 is RNA-binding. Positions N363–R372 are enriched in basic and acidic residues. Polar residues predominate over residues T373–P412. D461 acts as the For protease activity; shared with dimeric partner in catalysis. The integrase-type zinc finger-like stretch occupies residues N583 to C640. An Integrase catalytic domain is found at N660–P835. 2 residues coordinate Mg(2+): D671 and D736. Disordered stretches follow at residues S956–K1120 and D1146–Y1172. The segment covering S960 to T969 has biased composition (low complexity). A compositionally biased stretch (polar residues) spans S1005–T1015. The span at E1038–S1053 shows a compositional bias: basic and acidic residues. Composition is skewed to polar residues over residues Y1054 to E1082 and S1095 to L1106. A Bipartite nuclear localization signal motif is present at residues K1178–R1212. Positions N1338–Q1476 constitute a Reverse transcriptase Ty1/copia-type domain. Residues D1346, D1427, D1428, D1610, E1652, and D1685 each contribute to the Mg(2+) site. The RNase H Ty1/copia-type domain occupies D1610–K1752.

As to quaternary structure, the capsid protein forms a homotrimer, from which the VLPs are assembled. The protease is a homodimer, whose active site consists of two apposed aspartic acid residues. Post-translationally, initially, virus-like particles (VLPs) are composed of the structural unprocessed proteins Gag and Gag-Pol, and also contain the host initiator methionine tRNA (tRNA(i)-Met) which serves as a primer for minus-strand DNA synthesis, and a dimer of genomic Ty RNA. Processing of the polyproteins occurs within the particle and proceeds by an ordered pathway, called maturation. First, the protease (PR) is released by autocatalytic cleavage of the Gag-Pol polyprotein yielding capsid protein p45 and a Pol-p154 precursor protein. This cleavage is a prerequisite for subsequent processing of Pol-p154 at the remaining sites to release the mature structural and catalytic proteins. Maturation takes place prior to the RT reaction and is required to produce transposition-competent VLPs.

The protein resides in the cytoplasm. It localises to the nucleus. The catalysed reaction is DNA(n) + a 2'-deoxyribonucleoside 5'-triphosphate = DNA(n+1) + diphosphate. It catalyses the reaction Endonucleolytic cleavage to 5'-phosphomonoester.. Functionally, capsid protein (CA) is the structural component of the virus-like particle (VLP), forming the shell that encapsulates the retrotransposons dimeric RNA genome. The particles are assembled from trimer-clustered units and there are holes in the capsid shells that allow for the diffusion of macromolecules. CA also has nucleocapsid-like chaperone activity, promoting primer tRNA(i)-Met annealing to the multipartite primer-binding site (PBS), dimerization of Ty1 RNA and initiation of reverse transcription. The aspartyl protease (PR) mediates the proteolytic cleavages of the Gag and Gag-Pol polyproteins after assembly of the VLP. Its function is as follows. Reverse transcriptase/ribonuclease H (RT) is a multifunctional enzyme that catalyzes the conversion of the retro-elements RNA genome into dsDNA within the VLP. The enzyme displays a DNA polymerase activity that can copy either DNA or RNA templates, and a ribonuclease H (RNase H) activity that cleaves the RNA strand of RNA-DNA heteroduplexes during plus-strand synthesis and hydrolyzes RNA primers. The conversion leads to a linear dsDNA copy of the retrotransposon that includes long terminal repeats (LTRs) at both ends. In terms of biological role, integrase (IN) targets the VLP to the nucleus, where a subparticle preintegration complex (PIC) containing at least integrase and the newly synthesized dsDNA copy of the retrotransposon must transit the nuclear membrane. Once in the nucleus, integrase performs the integration of the dsDNA into the host genome. This chain is Transposon Ty1-NL1 Gag-Pol polyprotein (TY1B-NL1), found in Saccharomyces cerevisiae (strain ATCC 204508 / S288c) (Baker's yeast).